The primary structure comprises 282 residues: NADPH-dependent 7-cyano-7-deazaguanine reductase (282 aa).

Substrate is bound at residue 88–90; the sequence is IES. 90–91 serves as a coordination point for NADPH; it reads SK. Catalysis depends on Cys-190, which acts as the Thioimide intermediate. Asp-197 functions as the Proton donor in the catalytic mechanism. 229–230 contacts substrate; sequence HE. 258 to 259 serves as a coordination point for NADPH; that stretch reads RG.

This sequence belongs to the GTP cyclohydrolase I family. QueF type 2 subfamily. In terms of assembly, homodimer.

It is found in the cytoplasm. It carries out the reaction 7-aminomethyl-7-carbaguanine + 2 NADP(+) = 7-cyano-7-deazaguanine + 2 NADPH + 3 H(+). It participates in tRNA modification; tRNA-queuosine biosynthesis. Its function is as follows. Catalyzes the NADPH-dependent reduction of 7-cyano-7-deazaguanine (preQ0) to 7-aminomethyl-7-deazaguanine (preQ1). The protein is NADPH-dependent 7-cyano-7-deazaguanine reductase of Escherichia coli O9:H4 (strain HS).